The following is a 115-amino-acid chain: Large ribosomal subunit protein uL24 (115 aa).

It belongs to the universal ribosomal protein uL24 family. In terms of assembly, part of the 50S ribosomal subunit.

One of two assembly initiator proteins, it binds directly to the 5'-end of the 23S rRNA, where it nucleates assembly of the 50S subunit. Functionally, one of the proteins that surrounds the polypeptide exit tunnel on the outside of the subunit. The protein is Large ribosomal subunit protein uL24 of Deinococcus deserti (strain DSM 17065 / CIP 109153 / LMG 22923 / VCD115).